Consider the following 382-residue polypeptide: tRNA (guanine-N(7)-)-methyltransferase non-catalytic subunit wuho (382 aa).

Positions 40 to 59 (VKDTDAGNEPNGNQTQPTPA) are disordered. Polar residues predominate over residues 49 to 59 (PNGNQTQPTPA). WD repeat units follow at residues 149-190 (GHMS…ECFC) and 192-230 (GHTE…ELSK).

This sequence belongs to the WD repeat TRM82 family. As to quaternary structure, forms a heterodimer with the catalytic subunit.

The protein resides in the nucleus. It functions in the pathway tRNA modification; N(7)-methylguanine-tRNA biosynthesis. Functionally, required for the formation of N(7)-methylguanine at position 46 (m7G46) in tRNA. In the complex, it is required to stabilize and induce conformational changes of the catalytic subunit. This is tRNA (guanine-N(7)-)-methyltransferase non-catalytic subunit wuho from Anopheles gambiae (African malaria mosquito).